Here is a 549-residue protein sequence, read N- to C-terminus: CTP synthase (549 aa).

Residues 1 to 267 (MTKFVFVTGG…AAQVLSLLNL (267 aa)) form an amidoligase domain region. A CTP-binding site is contributed by S13. Residue S13 participates in UTP binding. ATP contacts are provided by residues 14–19 (SIGKGI) and D71. Positions 71 and 141 each coordinate Mg(2+). CTP is bound by residues 148-150 (DIE), 188-193 (KTKPTQ), and K224. UTP contacts are provided by residues 188–193 (KTKPTQ) and K224. The Glutamine amidotransferase type-1 domain occupies 292-534 (EIAIVGKYVR…VQAARTHSSD (243 aa)). G354 is an L-glutamine binding site. The active-site Nucleophile; for glutamine hydrolysis is C381. L-glutamine-binding positions include 382–385 (LGMQ), E405, and R462. Residues H507 and E509 contribute to the active site.

It belongs to the CTP synthase family. In terms of assembly, homotetramer.

The catalysed reaction is UTP + L-glutamine + ATP + H2O = CTP + L-glutamate + ADP + phosphate + 2 H(+). The enzyme catalyses L-glutamine + H2O = L-glutamate + NH4(+). It catalyses the reaction UTP + NH4(+) + ATP = CTP + ADP + phosphate + 2 H(+). Its pathway is pyrimidine metabolism; CTP biosynthesis via de novo pathway; CTP from UDP: step 2/2. With respect to regulation, allosterically activated by GTP, when glutamine is the substrate; GTP has no effect on the reaction when ammonia is the substrate. The allosteric effector GTP functions by stabilizing the protein conformation that binds the tetrahedral intermediate(s) formed during glutamine hydrolysis. Inhibited by the product CTP, via allosteric rather than competitive inhibition. Catalyzes the ATP-dependent amination of UTP to CTP with either L-glutamine or ammonia as the source of nitrogen. Regulates intracellular CTP levels through interactions with the four ribonucleotide triphosphates. The sequence is that of CTP synthase from Cyanothece sp. (strain PCC 7425 / ATCC 29141).